A 471-amino-acid polypeptide reads, in one-letter code: MSVVHHLPPGWLLDHLSFINKVNYQLCQHQESFCSKNNPTSSVYMDSLQLDPGSPFGAPAMCFAPDFTTVSGNDDEGSCEVITEKYVFRSELFNVTKPYIVPAVHKERQQSNKNENLVTDYKQEVSVSVGKKRKRCIAFNQGELDAMEYHTKIRELILDGSSKLIQEGLRSGFLYPLVEKQDGSSGCITLPLDACNLSELCEMAKHLPSLNEMELQTLQLMGDDVSVIELDLSSQIIENNSSFSKMITLMGQKYLLPPQSSFLLSDISCMQPLLNCGKTFDAIVIDPPWENKSVKRSNRYSSLSPQQIKRMPIPKLAAADCLIVTWVTNRQKHLCFVKEELYPSWSVEVVAEWYWVKITNSGEFVFPLDSPHKKPYECLVLGRVKEKTPLALRNPDVRIPPVPDQKLIVSVPCVLHSHKPPLTEVLRDYIKPGGQCLELFARNLQPGWMSWGNEVLKFQHMDYFIALESGC.

This sequence belongs to the MT-A70-like family.

The protein localises to the nucleus. It carries out the reaction a 2'-O-methyladenosine in U2 snRNA + S-adenosyl-L-methionine = an N(6)-methyl-2'-O-methyladenosine in U2 snRNA + S-adenosyl-L-homocysteine + H(+). It catalyses the reaction a 2'-deoxyadenosine in DNA + S-adenosyl-L-methionine = an N(6)-methyl-2'-deoxyadenosine in DNA + S-adenosyl-L-homocysteine + H(+). Its function is as follows. N(6)-adenine-specific methyltransferase that can methylate both RNAs and DNA. Acts as a N(6)-adenine-specific RNA methyltransferase by catalyzing formation of N6,2'-O-dimethyladenosine (m6A(m)) on internal positions of U2 small nuclear RNA (snRNA): methylates the 6th position of adenine residues with a pre-deposited 2'-O-methylation. Internal m6A(m) methylation of snRNAs regulates RNA splicing. Also able to act as a N(6)-adenine-specific DNA methyltransferase by mediating methylation of DNA on the 6th position of adenine (N(6)-methyladenosine). The existence of N(6)-methyladenosine (m6A) on DNA is however unclear in mammals, and additional evidences are required to confirm the role of the N(6)-adenine-specific DNA methyltransferase activity of METTL4 in vivo. Acts as a regulator of mitochondrial transcript levels and mitochondrial DNA (mtDNA) copy number by mediating mtDNA N(6)-methylation: m6A on mtDNA reduces transcription by repressing TFAM DNA-binding and bending. N(6)-methyladenosine deposition by METTL4 regulates Polycomb silencing by triggering ubiquitination and degradation of sensor proteins ASXL1 and MPND, leading to inactivation of the PR-DUB complex and subsequent preservation of Polycomb silencing. The sequence is that of N(6)-adenine-specific methyltransferase METTL4 from Mus musculus (Mouse).